The following is a 318-amino-acid chain: Glutathione synthetase (318 aa).

The 185-residue stretch at 133-317 (KMYALQFTSV…LGQQVMAWLF (185 aa)) folds into the ATP-grasp domain. 159-215 (VQQQGMAVLKPLGGKGGEGILFLQAGDRNLNSMIEISTQRGQLPVMLQEYLPAAKEG) is an ATP binding site. Mg(2+)-binding residues include glutamate 288 and asparagine 290.

Belongs to the prokaryotic GSH synthase family. Mg(2+) is required as a cofactor. The cofactor is Mn(2+).

The enzyme catalyses gamma-L-glutamyl-L-cysteine + glycine + ATP = glutathione + ADP + phosphate + H(+). It participates in sulfur metabolism; glutathione biosynthesis; glutathione from L-cysteine and L-glutamate: step 2/2. This chain is Glutathione synthetase, found in Thermosynechococcus vestitus (strain NIES-2133 / IAM M-273 / BP-1).